Here is a 539-residue protein sequence, read N- to C-terminus: Dihydrolipoyllysine-residue acetyltransferase component 3 of pyruvate dehydrogenase complex, mitochondrial (539 aa).

A mitochondrion-targeting transit peptide spans 1 to 102; it reads MAYASRIINH…SCLMQSARGF (102 aa). A Lipoyl-binding domain is found at 111–187; that stretch reads HQEIGMPSLS…QVGEVIAITV (77 aa). Lysine 152 carries the post-translational modification N6-lipoyllysine. The disordered stretch occupies residues 195–247; that stretch reads KFKDYTPSSTADAAPTKAEPTPAPPKEEKVKQPSSPPEPKASKPSTPPTGDRV. The segment covering 204-214 has biased composition (low complexity); that stretch reads TADAAPTKAEP. The Peripheral subunit-binding (PSBD) domain occupies 248-285; sequence FASPLARKLAEDNNVPLSDIEGTGPEGRIVKADIDEYL. Residues histidine 512 and aspartate 516 contribute to the active site.

The protein belongs to the 2-oxoacid dehydrogenase family. The cofactor is (R)-lipoate.

The protein resides in the mitochondrion matrix. It carries out the reaction N(6)-[(R)-dihydrolipoyl]-L-lysyl-[protein] + acetyl-CoA = N(6)-[(R)-S(8)-acetyldihydrolipoyl]-L-lysyl-[protein] + CoA. The pyruvate dehydrogenase complex catalyzes the overall conversion of pyruvate to acetyl-CoA and CO(2). It contains multiple copies of three enzymatic components: pyruvate dehydrogenase (E1), dihydrolipoamide acetyltransferase (E2) and lipoamide dehydrogenase (E3). This chain is Dihydrolipoyllysine-residue acetyltransferase component 3 of pyruvate dehydrogenase complex, mitochondrial, found in Arabidopsis thaliana (Mouse-ear cress).